We begin with the raw amino-acid sequence, 699 residues long: Polyribonucleotide nucleotidyltransferase (699 aa).

Mg(2+) contacts are provided by Asp485 and Asp491. The region spanning 552-611 (PRITTIKINPEKIRDVIGKGGAVIRALTEETGTTIELEDDGTVKIASSNGDATREAIRRI) is the KH domain. An S1 motif domain is found at 621–689 (GRIYNGKVIR…RQGRVRLSIK (69 aa)).

This sequence belongs to the polyribonucleotide nucleotidyltransferase family. Component of the RNA degradosome, which is a multiprotein complex involved in RNA processing and mRNA degradation. The cofactor is Mg(2+).

It localises to the cytoplasm. The catalysed reaction is RNA(n+1) + phosphate = RNA(n) + a ribonucleoside 5'-diphosphate. In terms of biological role, involved in mRNA degradation. Catalyzes the phosphorolysis of single-stranded polyribonucleotides processively in the 3'- to 5'-direction. The protein is Polyribonucleotide nucleotidyltransferase of Shewanella sp. (strain ANA-3).